Here is a 133-residue protein sequence, read N- to C-terminus: Protein U17 (133 aa).

The helical transmembrane segment at 82–102 threads the bilayer; it reads FVSVLWCVILVFVVKIKLFFL.

Its subcellular location is the membrane. This Homo sapiens (Human) protein is Protein U17 (U17/U16).